A 143-amino-acid polypeptide reads, in one-letter code: 3-dehydroquinate dehydratase (143 aa).

The Proton acceptor role is filled by tyrosine 22. Residues asparagine 73, histidine 79, and aspartate 86 each contribute to the substrate site. Catalysis depends on histidine 99, which acts as the Proton donor. Residues 100–101 (IS) and arginine 110 each bind substrate.

Belongs to the type-II 3-dehydroquinase family. In terms of assembly, homododecamer.

It carries out the reaction 3-dehydroquinate = 3-dehydroshikimate + H2O. Its pathway is metabolic intermediate biosynthesis; chorismate biosynthesis; chorismate from D-erythrose 4-phosphate and phosphoenolpyruvate: step 3/7. In terms of biological role, catalyzes a trans-dehydration via an enolate intermediate. This chain is 3-dehydroquinate dehydratase, found in Salinispora arenicola (strain CNS-205).